The primary structure comprises 431 residues: MGTVVIVGTQWGDEGKGKITDFLSQGAKVVSRYQGGDNAGHTIHANGEVYKLRLVPSGVLYPHQLSVIGNGVVVNPKSLVGELARLAEQGVTGENLRISDRAHVILPYHIKLDKLQEAAKGADKIGTTNRGIGPAYMDKAARVGIRMADLLDKEIFEERLKANLKAKNEEFVKVYDSTPMNFDDIFEEYYQYGQQLKQYVCDTSIVLNDAIDKSEHVLFEGAQGIMLDIDQGTYPFVTSSNPAGGVTVGAGVGASKIDRVVGVAKAYTSRVGDGPFPTELLDKTGDFIRNAGHEFGTVTGRPRRIGWFDAVVVRHSRRVAGITDLCLNSIDVLTGLDKVKICVAYERDGERVENYPASLKFLSECKPVYEELPGWQEDITKAKTLDDLPENARRYVERITELLGVDLLTFSVGPDRDQTNVLENVWDKVSR.

GTP is bound by residues 12-18 (GDEGKGK) and 40-42 (GHT). Asp13 acts as the Proton acceptor in catalysis. Mg(2+) contacts are provided by Asp13 and Gly40. IMP is bound by residues 13-16 (DEGK), 38-41 (NAGH), Thr128, Arg142, Gln223, Thr238, and Arg301. His41 functions as the Proton donor in the catalytic mechanism. Residue 297–303 (TVTGRPR) coordinates substrate. Residues Arg303, 329–331 (SID), and 411–413 (SVG) contribute to the GTP site.

It belongs to the adenylosuccinate synthetase family. As to quaternary structure, homodimer. Mg(2+) serves as cofactor.

Its subcellular location is the cytoplasm. It carries out the reaction IMP + L-aspartate + GTP = N(6)-(1,2-dicarboxyethyl)-AMP + GDP + phosphate + 2 H(+). Its pathway is purine metabolism; AMP biosynthesis via de novo pathway; AMP from IMP: step 1/2. In terms of biological role, plays an important role in the de novo pathway of purine nucleotide biosynthesis. Catalyzes the first committed step in the biosynthesis of AMP from IMP. This chain is Adenylosuccinate synthetase, found in Lacticaseibacillus casei (strain BL23) (Lactobacillus casei).